Reading from the N-terminus, the 502-residue chain is Acetyl-coenzyme A carboxylase carboxyl transferase subunit beta, chloroplastic (502 aa).

The span at 191–202 shows a compositional bias: low complexity; the sequence is GSDSESSSIRTS. The disordered stretch occupies residues 191–212; the sequence is GSDSESSSIRTSGNDSNFNVRE. A CoA carboxyltransferase N-terminal domain is found at 226–497; that stretch reads LWVQCENCYE…NQNSSGARGS (272 aa). Zn(2+) contacts are provided by Cys230, Cys233, Cys249, and Cys252. A C4-type zinc finger spans residues 230 to 252; the sequence is CENCYELNYRSFFRSKMNICEQC.

Belongs to the AccD/PCCB family. As to quaternary structure, acetyl-CoA carboxylase is a heterohexamer composed of biotin carboxyl carrier protein, biotin carboxylase and 2 subunits each of ACCase subunit alpha and ACCase plastid-coded subunit beta (accD). The cofactor is Zn(2+).

It localises to the plastid. The protein localises to the chloroplast stroma. The catalysed reaction is N(6)-carboxybiotinyl-L-lysyl-[protein] + acetyl-CoA = N(6)-biotinyl-L-lysyl-[protein] + malonyl-CoA. Its pathway is lipid metabolism; malonyl-CoA biosynthesis; malonyl-CoA from acetyl-CoA: step 1/1. Its function is as follows. Component of the acetyl coenzyme A carboxylase (ACC) complex. Biotin carboxylase (BC) catalyzes the carboxylation of biotin on its carrier protein (BCCP) and then the CO(2) group is transferred by the transcarboxylase to acetyl-CoA to form malonyl-CoA. This Chloranthus spicatus (Chulantree) protein is Acetyl-coenzyme A carboxylase carboxyl transferase subunit beta, chloroplastic.